The sequence spans 490 residues: Betaine aldehyde dehydrogenase (490 aa).

2 residues coordinate K(+): Ile-27 and Asp-93. 150–152 (GAW) is an NAD(+) binding site. The Charge relay system role is filled by Lys-162. 176-179 (KPSE) contributes to the NAD(+) binding site. Val-180 contributes to the K(+) binding site. NAD(+) is bound at residue 230–233 (GTDT). Leu-246 contacts K(+). Catalysis depends on Glu-252, which acts as the Proton acceptor. 3 residues coordinate NAD(+): Gly-254, Cys-286, and Glu-387. Residue Cys-286 is the Nucleophile of the active site. Cys-286 carries the post-translational modification Cysteine sulfenic acid (-SOH). K(+) contacts are provided by Lys-457 and Gly-460. Catalysis depends on Glu-464, which acts as the Charge relay system.

The protein belongs to the aldehyde dehydrogenase family. As to quaternary structure, dimer of dimers. It depends on K(+) as a cofactor.

It carries out the reaction betaine aldehyde + NAD(+) + H2O = glycine betaine + NADH + 2 H(+). The protein operates within amine and polyamine biosynthesis; betaine biosynthesis via choline pathway; betaine from betaine aldehyde: step 1/1. Functionally, involved in the biosynthesis of the osmoprotectant glycine betaine. Catalyzes the irreversible oxidation of betaine aldehyde to the corresponding acid. The polypeptide is Betaine aldehyde dehydrogenase (Pseudomonas fluorescens (strain SBW25)).